Consider the following 504-residue polypeptide: Maturase K (504 aa).

It belongs to the intron maturase 2 family. MatK subfamily.

The protein resides in the plastid. It is found in the chloroplast. Its function is as follows. Usually encoded in the trnK tRNA gene intron. Probably assists in splicing its own and other chloroplast group II introns. The protein is Maturase K of Quercus coccifera (Kermes oak).